Reading from the N-terminus, the 324-residue chain is o-succinylbenzoate synthase (324 aa).

Catalysis depends on K135, which acts as the Proton donor. D163, E192, and D215 together coordinate Mg(2+). Catalysis depends on K237, which acts as the Proton acceptor.

Belongs to the mandelate racemase/muconate lactonizing enzyme family. MenC type 1 subfamily. It depends on a divalent metal cation as a cofactor.

The enzyme catalyses (1R,6R)-6-hydroxy-2-succinyl-cyclohexa-2,4-diene-1-carboxylate = 2-succinylbenzoate + H2O. The protein operates within quinol/quinone metabolism; 1,4-dihydroxy-2-naphthoate biosynthesis; 1,4-dihydroxy-2-naphthoate from chorismate: step 4/7. Its pathway is quinol/quinone metabolism; menaquinone biosynthesis. In terms of biological role, converts 2-succinyl-6-hydroxy-2,4-cyclohexadiene-1-carboxylate (SHCHC) to 2-succinylbenzoate (OSB). This is o-succinylbenzoate synthase from Aliivibrio fischeri (strain ATCC 700601 / ES114) (Vibrio fischeri).